The following is a 436-amino-acid chain: MGKPVVAIVGRPNVGKSTIFNRIAGERISIVEDTPGVTRDRIYSSAEWLNYDFNLIDTGGIDIGDEPFLAQIRHQAEIAMDEADVIIFMVNGRDGVTSADEEVAKILYRTKKPVVLAVNKLDNPEMRSDVYDFYALGFGEPYPISGTHGLGLGDLLDAVAEHFKNLPDTQYDEQVVQFCLIGRPNVGKSSLVNAMLGEDRVIVSNIAGTTRDAVDTMFAYNQRDFVIVDTAGMRKKGKVYETTEKYSVLRALKAIDRSDVVAVVLDGEEGIIEQDKRIAGYAHEAGKAVVIVVNKWDAVEKDERTMKEFEQNIREHFQFLDYAPVLFMSALTKKRIHTLMPSIITASENHAMRVQTNILNDIIMDAVAMNPTPTHNGQRLKIYYATQVAIKPPSFVVFVNDPELMHFSYERFLENRIRDAFGFEGTPIKIFARARK.

EngA-type G domains follow at residues 4–167 (PVVA…KNLP) and 176–351 (VQFC…ENHA). GTP contacts are provided by residues 10–17 (GRPNVGKS), 57–61 (DTGGI), 119–122 (NKLD), 182–189 (GRPNVGKS), 229–233 (DTAGM), and 294–297 (NKWD). The KH-like domain occupies 352-436 (MRVQTNILND…PIKIFARARK (85 aa)).

The protein belongs to the TRAFAC class TrmE-Era-EngA-EngB-Septin-like GTPase superfamily. EngA (Der) GTPase family. As to quaternary structure, associates with the 50S ribosomal subunit.

Functionally, GTPase that plays an essential role in the late steps of ribosome biogenesis. This chain is GTPase Der, found in Bacillus pumilus (strain SAFR-032).